Reading from the N-terminus, the 196-residue chain is Holliday junction branch migration complex subunit RuvA (196 aa).

A domain I region spans residues 1 to 63 (MINKIHGKVI…ENELKLFGFL (63 aa)). A domain II region spans residues 64 to 139 (NSDERETFKS…KLLINNELES (76 aa)). A region of interest (flexible linker) is located at residue serine 139. The interval 139 to 196 (SSLFGFKELEESIVSMGFDRKIVNSKLKEACDLIEFSNLKDSEKEQFLFKEVLKRMSN) is domain III.

This sequence belongs to the RuvA family. Homotetramer. Forms an RuvA(8)-RuvB(12)-Holliday junction (HJ) complex. HJ DNA is sandwiched between 2 RuvA tetramers; dsDNA enters through RuvA and exits via RuvB. An RuvB hexamer assembles on each DNA strand where it exits the tetramer. Each RuvB hexamer is contacted by two RuvA subunits (via domain III) on 2 adjacent RuvB subunits; this complex drives branch migration. In the full resolvosome a probable DNA-RuvA(4)-RuvB(12)-RuvC(2) complex forms which resolves the HJ.

The protein localises to the cytoplasm. The RuvA-RuvB-RuvC complex processes Holliday junction (HJ) DNA during genetic recombination and DNA repair, while the RuvA-RuvB complex plays an important role in the rescue of blocked DNA replication forks via replication fork reversal (RFR). RuvA specifically binds to HJ cruciform DNA, conferring on it an open structure. The RuvB hexamer acts as an ATP-dependent pump, pulling dsDNA into and through the RuvAB complex. HJ branch migration allows RuvC to scan DNA until it finds its consensus sequence, where it cleaves and resolves the cruciform DNA. This is Holliday junction branch migration complex subunit RuvA from Borrelia garinii subsp. bavariensis (strain ATCC BAA-2496 / DSM 23469 / PBi) (Borreliella bavariensis).